Here is a 317-residue protein sequence, read N- to C-terminus: Acetyl-coenzyme A carboxylase carboxyl transferase subunit alpha (317 aa).

Residues 40-294 (RLQKKSEELT…KQQILADLQD (255 aa)) enclose the CoA carboxyltransferase C-terminal domain.

Belongs to the AccA family. In terms of assembly, acetyl-CoA carboxylase is a heterohexamer composed of biotin carboxyl carrier protein (AccB), biotin carboxylase (AccC) and two subunits each of ACCase subunit alpha (AccA) and ACCase subunit beta (AccD).

It is found in the cytoplasm. It catalyses the reaction N(6)-carboxybiotinyl-L-lysyl-[protein] + acetyl-CoA = N(6)-biotinyl-L-lysyl-[protein] + malonyl-CoA. The protein operates within lipid metabolism; malonyl-CoA biosynthesis; malonyl-CoA from acetyl-CoA: step 1/1. Its function is as follows. Component of the acetyl coenzyme A carboxylase (ACC) complex. First, biotin carboxylase catalyzes the carboxylation of biotin on its carrier protein (BCCP) and then the CO(2) group is transferred by the carboxyltransferase to acetyl-CoA to form malonyl-CoA. The sequence is that of Acetyl-coenzyme A carboxylase carboxyl transferase subunit alpha from Actinobacillus pleuropneumoniae serotype 5b (strain L20).